The chain runs to 100 residues: Small ribosomal subunit protein uS14c (100 aa).

It belongs to the universal ribosomal protein uS14 family. As to quaternary structure, part of the 30S ribosomal subunit.

The protein resides in the plastid. Its subcellular location is the cyanelle. Functionally, binds 16S rRNA, required for the assembly of 30S particles. The protein is Small ribosomal subunit protein uS14c of Cyanophora paradoxa.